Here is a 422-residue protein sequence, read N- to C-terminus: Acyl-[acyl-carrier-protein] desaturase 6, chloroplastic (422 aa).

A chloroplast-targeting transit peptide spans 1 to 46; the sequence is MAATATMAMPLANRLRCKPNTNSSSPSRTLFGRRVTMISSSRWMCR. Glu154, Glu192, His195, Glu245, Glu280, and His283 together coordinate Fe cation.

This sequence belongs to the fatty acid desaturase type 2 family. As to quaternary structure, homodimer. The cofactor is Fe(2+).

The protein resides in the plastid. It is found in the chloroplast. Its pathway is lipid metabolism; fatty acid metabolism. In terms of biological role, introduces a cis double bond in the acyl chain of an acyl-[acyl-carrier protein]. In Oryza sativa subsp. indica (Rice), this protein is Acyl-[acyl-carrier-protein] desaturase 6, chloroplastic.